The chain runs to 377 residues: DNA replication and repair protein RecF (377 aa).

Position 30–37 (30–37 (GNNGSGKS)) interacts with ATP.

Belongs to the RecF family.

The protein localises to the cytoplasm. The RecF protein is involved in DNA metabolism; it is required for DNA replication and normal SOS inducibility. RecF binds preferentially to single-stranded, linear DNA. It also seems to bind ATP. This chain is DNA replication and repair protein RecF, found in Colwellia psychrerythraea (strain 34H / ATCC BAA-681) (Vibrio psychroerythus).